Consider the following 518-residue polypeptide: GMP synthase [glutamine-hydrolyzing] (518 aa).

The Glutamine amidotransferase type-1 domain maps to 13–203 (KIIVLDFGSQ…ALNVCGCKGD (191 aa)). Cys-90 functions as the Nucleophile in the catalytic mechanism. Active-site residues include His-177 and Glu-179. Residues 204 to 393 (WTMENFSEVE…LGMPDAIVWR (190 aa)) form the GMPS ATP-PPase domain. Position 231–237 (231–237 (SGGVDSS)) interacts with ATP.

As to quaternary structure, homodimer.

It carries out the reaction XMP + L-glutamine + ATP + H2O = GMP + L-glutamate + AMP + diphosphate + 2 H(+). It functions in the pathway purine metabolism; GMP biosynthesis; GMP from XMP (L-Gln route): step 1/1. In terms of biological role, catalyzes the synthesis of GMP from XMP. This is GMP synthase [glutamine-hydrolyzing] from Listeria monocytogenes serovar 1/2a (strain ATCC BAA-679 / EGD-e).